A 974-amino-acid polypeptide reads, in one-letter code: Collagen alpha-1(I) chain (974 aa).

Residues 1-14 are compositionally biased toward low complexity; it reads GISVPGPMGPSGPR. A disordered region spans residues 1 to 974; that stretch reads GISVPGPMGP…PGPPGPPGPP (974 aa). A 4-hydroxyproline mark is found at Pro-17, Pro-20, Pro-23, Pro-32, Pro-35, Pro-38, Pro-53, Pro-68, Pro-75, and Pro-81. Residues 25 to 44 show a composition bias toward low complexity; that stretch reads PQGFQGPPGEPGEPGASGPM. Residues 56–73 are compositionally biased toward basic and acidic residues; that stretch reads NGDDGEAGKPGRPGERRG. Lys-84 is subject to 5-hydroxylysine; alternate. Lys-84 carries O-linked (Gal...) hydroxylysine; alternate glycosylation. Ser-90 is subject to Phosphoserine. Residues 98–114 show a composition bias toward low complexity; that stretch reads DAGPAGPKGEPGSPGEN. 16 positions are modified to 4-hydroxyproline: Pro-108, Pro-111, Pro-117, Pro-126, Pro-132, Pro-153, Pro-162, Pro-165, Pro-192, Pro-195, Pro-207, Pro-213, Pro-222, Pro-228, Pro-231, and Pro-245. Residues 132–150 show a composition bias toward low complexity; sequence PGASGPAGARGNDGATGAA. Residues 152–164 are compositionally biased toward pro residues; the sequence is PPGPTGPAGPPGF. A compositionally biased stretch (low complexity) spans 198–228; it reads AGAAGPAGNPGADGQPGAKGANGAPGIAGAP. Lys-248 is modified (5-hydroxylysine). A 4-hydroxyproline mark is found at Pro-254, Pro-257, Pro-269, Pro-278, Pro-293, Pro-299, Pro-308, and Pro-314. Over residues 303–312 the composition is skewed to gly residues; it reads GERGGPGSRG. Lys-323 carries the post-translational modification 5-hydroxylysine. 24 positions are modified to 4-hydroxyproline: Pro-328, Pro-337, Pro-343, Pro-349, Pro-358, Pro-361, Pro-370, Pro-379, Pro-385, Pro-397, Pro-406, Pro-415, Pro-418, Pro-436, Pro-454, Pro-460, Pro-466, Pro-472, Pro-484, Pro-493, Pro-505, Pro-520, Pro-527, and Pro-536. Residues 352–378 show a composition bias toward low complexity; sequence KGLTGSPGSPGPDGKTGPPGPAGQDGR. The segment covering 387–406 has biased composition (low complexity); it reads ARGQAGVMGFPGPKGAAGEP. Residues 504 to 517 show a composition bias toward low complexity; the sequence is APGNDGAKGDAGAP. Lys-548 is modified (5-hydroxylysine). 3 positions are modified to 4-hydroxyproline: Pro-554, Pro-569, and Pro-575. Over residues 581-595 the composition is skewed to low complexity; it reads SGPSGPAGPTGARGA. At Ser-584 the chain carries Phosphoserine. 8 positions are modified to 4-hydroxyproline: Pro-596, Pro-602, Pro-605, Pro-614, Pro-620, Pro-638, Pro-647, and Pro-656. Residues 608 to 635 are compositionally biased toward low complexity; the sequence is AGFAGPPGADGQPGAKGEPGDAGAKGDA. Over residues 637–649 the composition is skewed to pro residues; sequence PPGPAGPTGPPGP. Lys-659 carries the 5-hydroxylysine modification. Residues 664-680 show a composition bias toward low complexity; it reads SAGPPGATGFPGAAGRV. 4-hydroxyproline occurs at positions 668 and 674. At Pro-682 the chain carries 3-hydroxyproline. Pro-683, Pro-692, Pro-695, Pro-716, Pro-725, Pro-733, Pro-742, Pro-760, Pro-769, Pro-772, Pro-778, Pro-793, Pro-799, Pro-805, Pro-814, and Pro-820 each carry 4-hydroxyproline. Residues 709 to 718 are compositionally biased toward low complexity; that stretch reads ETGPAGRPGE. Low complexity predominate over residues 730 to 742; that stretch reads KGSPGADGPAGAP. Positions 792–802 are enriched in pro residues; that stretch reads PPGPVGPPGLA. Residues 804–826 are compositionally biased toward low complexity; sequence PPGESGREGSPGAEGSPGRDGSP. The span at 828–844 shows a compositional bias: pro residues; sequence PKGPPGAPGAPGAPGPV. Residue Lys-829 is modified to 5-hydroxylysine. 3 positions are modified to 4-hydroxyproline: Pro-832, Pro-835, and Pro-838. Residues 865 to 879 show a composition bias toward low complexity; it reads AGPAGARGPAGPQGP. Positions 880-894 are enriched in basic and acidic residues; that stretch reads RGDKGETGEQGDRRG. At Lys-883 the chain carries 5-hydroxylysine. 4 positions are modified to 4-hydroxyproline: Pro-905, Pro-908, Pro-926, and Pro-941. The segment covering 908–941 has biased composition (low complexity); that stretch reads PGEQGPSGASGPAGPRGPPGSAGSPGKDGLNGLP. At Pro-946 the chain carries 3-hydroxyproline. At Pro-947 the chain carries 4-hydroxyproline. Residues 959–974 are compositionally biased toward pro residues; that stretch reads VGPPGPPGPPGPPGPP. 3-hydroxyproline is present on Pro-961. 4-hydroxyproline is present on Pro-962. Pro-964 is modified (3-hydroxyproline). Residue Pro-965 is modified to 4-hydroxyproline. Pro-967 is subject to 3-hydroxyproline. 4-hydroxyproline occurs at positions 968, 971, and 974.

The protein belongs to the fibrillar collagen family. Trimers of one alpha 2(I) and two alpha 1(I) chains. Contains mostly 4-hydroxyproline. Proline residues at the third position of the tripeptide repeating unit (G-X-Y) are hydroxylated in some or all of the chains. Post-translationally, contains 3-hydroxyproline at a few sites. This modification occurs on the first proline residue in the sequence motif Gly-Pro-Hyp, where Hyp is 4-hydroxyproline. In terms of processing, lysine residues at the third position of the tripeptide repeating unit (G-X-Y) are 5-hydroxylated in some or all of the chains. O-glycosylated on hydroxylated lysine residues. The O-linked glycan consists of a Glc-Gal disaccharide. In terms of tissue distribution, expressed in bones.

It is found in the secreted. The protein resides in the extracellular space. It localises to the extracellular matrix. Type I collagen is a member of group I collagen (fibrillar forming collagen). This Scelidodon sp. (strain SLP-2019) (South American ground sloth) protein is Collagen alpha-1(I) chain.